Consider the following 163-residue polypeptide: Protein NAG1 (163 aa).

Residues 76-96 traverse the membrane as a helical segment; that stretch reads ACFSVRIVLPLSLTISISALM.

The protein localises to the membrane. Functionally, involved in yeast cell wall biogenesis. The sequence is that of Protein NAG1 (NAG1) from Saccharomyces cerevisiae (strain ATCC 204508 / S288c) (Baker's yeast).